A 450-amino-acid polypeptide reads, in one-letter code: Tubulin beta-3 chain (450 aa).

An MREI motif motif is present at residues 1–4 (MREI). The GTP site is built by Q11, E69, S138, G142, T143, and G144. E69 contributes to the Mg(2+) binding site. At S172 the chain carries Phosphoserine; by CDK1. Positions 204 and 226 each coordinate GTP. The segment at 422–450 (YQQYQDATAEEEGEMYEDDDEESEAQGPK) is disordered. Residues 429–450 (TAEEEGEMYEDDDEESEAQGPK) are compositionally biased toward acidic residues. E438 carries the 5-glutamyl polyglutamate modification. Residue S444 is modified to Phosphoserine.

The protein belongs to the tubulin family. In terms of assembly, heterodimer of alpha- and beta-tubulin. A typical microtubule is a hollow water-filled tube with an outer diameter of 25 nm and an inner diameter of 15 nM. Alpha-beta heterodimers associate head-to-tail to form protofilaments running lengthwise along the microtubule wall with the beta-tubulin subunit facing the microtubule plus end conferring a structural polarity. Microtubules usually have 13 protofilaments but different protofilament numbers can be found in some organisms and specialized cells. Interacts with gamma-tubulin; the interaction allows microtubules to nucleate from the gamma-tubulin ring complex (gTuRC). Interacts with UNC5C (via cytoplasmic domain); this interaction is decreased by NTN1/Netrin-1. Interacts with NLRP5/MATER at cytoskeleton microtubules. Interacts with DPYSL5. Interacts with CFAP61. It depends on Mg(2+) as a cofactor. Some glutamate residues at the C-terminus are polyglycylated, resulting in polyglycine chains on the gamma-carboxyl group. Glycylation is mainly limited to tubulin incorporated into axonemes (cilia and flagella) whereas glutamylation is prevalent in neuronal cells, centrioles, axonemes, and the mitotic spindle. Both modifications can coexist on the same protein on adjacent residues, and lowering polyglycylation levels increases polyglutamylation, and reciprocally. Cilia and flagella glycylation is required for their stability and maintenance. Flagella glycylation controls sperm motility. In terms of processing, some glutamate residues at the C-terminus are polyglutamylated, resulting in polyglutamate chains on the gamma-carboxyl group. Polyglutamylation plays a key role in microtubule severing by spastin (SPAST). SPAST preferentially recognizes and acts on microtubules decorated with short polyglutamate tails: severing activity by SPAST increases as the number of glutamates per tubulin rises from one to eight, but decreases beyond this glutamylation threshold. Glutamylation is also involved in cilia motility. Post-translationally, phosphorylated on Ser-172 by CDK1 during the cell cycle, from metaphase to telophase, but not in interphase. This phosphorylation inhibits tubulin incorporation into microtubules.

The protein localises to the cytoplasm. The protein resides in the cytoskeleton. It localises to the cell projection. It is found in the growth cone. Its subcellular location is the lamellipodium. The protein localises to the filopodium. In terms of biological role, tubulin is the major constituent of microtubules, protein filaments consisting of alpha- and beta-tubulin heterodimers. Microtubules grow by the addition of GTP-tubulin dimers to the microtubule end, where a stabilizing cap forms. Below the cap, alpha-beta tubulin heterodimers are in GDP-bound state, owing to GTPase activity of alpha-tubulin. TUBB3 plays a critical role in proper axon guidance and maintenance. Binding of NTN1/Netrin-1 to its receptor UNC5C might cause dissociation of UNC5C from polymerized TUBB3 in microtubules and thereby lead to increased microtubule dynamics and axon repulsion. Plays a role in dorsal root ganglion axon projection towards the spinal cord. The sequence is that of Tubulin beta-3 chain (Tubb3) from Rattus norvegicus (Rat).